A 248-amino-acid polypeptide reads, in one-letter code: MSVLPCSINTLKGIYDLSGVEVGQHFYWQIGGFQVHAQVLITSWVVIAILLGSATIVVRNPQTIPTDGQNFFEYVLEFIRDLTKTQIGEEEYGPWVPFIGTMFLFIFVSNWSGALLPRKIIELPQGELAAPTNDINTTVALALPTSVAYFYAGISKKGLGYFGKYIQPTPILLPINILEDFTKPLSLSFRLFGNILADELVVVVLVSLVPSLVPIPVMFLGLFTSGIQALIFATLAAAYIGESMEGHH.

5 consecutive transmembrane segments (helical) span residues 38–58, 96–116, 135–155, 200–220, and 221–241; these read QVLI…TIVV, VPFI…GALL, INTT…AGIS, LVVV…VMFL, and GLFT…AYIG.

The protein belongs to the ATPase A chain family. As to quaternary structure, F-type ATPases have 2 components, CF(1) - the catalytic core - and CF(0) - the membrane proton channel. CF(1) has five subunits: alpha(3), beta(3), gamma(1), delta(1), epsilon(1). CF(0) has four main subunits: a, b, b' and c.

The protein localises to the plastid. It localises to the chloroplast thylakoid membrane. Its function is as follows. Key component of the proton channel; it plays a direct role in the translocation of protons across the membrane. The polypeptide is ATP synthase subunit a, chloroplastic (Amborella trichopoda).